A 436-amino-acid polypeptide reads, in one-letter code: Acetyl-CoA decarbonylase/synthase complex subunit delta 2 (436 aa).

This sequence belongs to the CdhD family. As to quaternary structure, heterodimer of delta and gamma chains. The ACDS complex is made up of alpha, epsilon, beta, gamma and delta chains with a probable stoichiometry of (alpha(2)epsilon(2))(4)-beta(8)-(gamma(1)delta(1))(8) (Potential).

Its pathway is one-carbon metabolism; methanogenesis from acetate. Part of a complex that catalyzes the reversible cleavage of acetyl-CoA, allowing growth on acetate as sole source of carbon and energy. Probably maintains the overall quaternary structure of the ACDS complex. The sequence is that of Acetyl-CoA decarbonylase/synthase complex subunit delta 2 (cdhD2) from Methanosarcina acetivorans (strain ATCC 35395 / DSM 2834 / JCM 12185 / C2A).